The chain runs to 514 residues: Histidine ammonia-lyase (514 aa).

The segment at residues 143 to 145 (ASG) is a cross-link (5-imidazolinone (Ala-Gly)). Ser-144 carries the 2,3-didehydroalanine (Ser) modification.

The protein belongs to the PAL/histidase family. Post-translationally, contains an active site 4-methylidene-imidazol-5-one (MIO), which is formed autocatalytically by cyclization and dehydration of residues Ala-Ser-Gly.

It localises to the cytoplasm. The enzyme catalyses L-histidine = trans-urocanate + NH4(+). It functions in the pathway amino-acid degradation; L-histidine degradation into L-glutamate; N-formimidoyl-L-glutamate from L-histidine: step 1/3. In Photorhabdus laumondii subsp. laumondii (strain DSM 15139 / CIP 105565 / TT01) (Photorhabdus luminescens subsp. laumondii), this protein is Histidine ammonia-lyase.